The primary structure comprises 444 residues: Zinc finger protein ZIC 1 (444 aa).

The C2H2-type 1 zinc finger occupies 222 to 257 (LICKWIEPEQLANPKKSCNKTFSTMHELVTHVTVEH). Residues 271–293 (EECPREGKPFKAKYKLVNHIRVH) form a C2H2-type 2; degenerate zinc finger. 3 C2H2-type zinc fingers span residues 299 to 323 (FPCP…KRTH), 329 to 353 (FKCE…MHVH), and 359 to 381 (YLCK…MKVH). A disordered region spans residues 372-432 (SSLRKHMKVH…SSAGHHTASH (61 aa)). Positions 383 to 432 (SSSQGSQPSPAASSGYESSTPPTIVSPSTENQTASSLSPSSSAGHHTASH) are enriched in low complexity.

This sequence belongs to the GLI C2H2-type zinc-finger protein family.

It localises to the nucleus. Its subcellular location is the cytoplasm. Acts as a transcriptional activator. Involved in neurogenesis. Plays important roles in the early stage of organogenesis of the CNS, as well as during dorsal spinal cord development and maturation of the cerebellum. Binds to the minimal GLI-consensus sequence 5'-TGGGTGGTC-3'. The sequence is that of Zinc finger protein ZIC 1 (ZIC1) from Gallus gallus (Chicken).